A 290-amino-acid chain; its full sequence is tRNA dimethylallyltransferase (290 aa).

G9–T16 lines the ATP pocket. Position 11-16 (T11–T16) interacts with substrate. The interaction with substrate tRNA stretch occupies residues D34–Q37.

This sequence belongs to the IPP transferase family. As to quaternary structure, monomer. Requires Mg(2+) as cofactor.

The catalysed reaction is adenosine(37) in tRNA + dimethylallyl diphosphate = N(6)-dimethylallyladenosine(37) in tRNA + diphosphate. Its function is as follows. Catalyzes the transfer of a dimethylallyl group onto the adenine at position 37 in tRNAs that read codons beginning with uridine, leading to the formation of N6-(dimethylallyl)adenosine (i(6)A). This is tRNA dimethylallyltransferase from Phytoplasma australiense.